The chain runs to 51 residues: Large ribosomal subunit protein bL33 (51 aa).

A disordered region spans residues 1–20; it reads MRDKIRLNSSAGTGHFYTTD.

The protein belongs to the bacterial ribosomal protein bL33 family.

In Psychromonas ingrahamii (strain DSM 17664 / CCUG 51855 / 37), this protein is Large ribosomal subunit protein bL33.